The sequence spans 240 residues: Ribitol-5-phosphate cytidylyltransferase (240 aa).

Residues 8-11 (FAGG) and 81-87 (GETGQMS) contribute to the CTP site.

The protein belongs to the IspD/TarI cytidylyltransferase family. TarI subfamily.

The enzyme catalyses D-ribitol 5-phosphate + CTP + H(+) = CDP-L-ribitol + diphosphate. It participates in cell wall biogenesis; poly(ribitol phosphate) teichoic acid biosynthesis. Catalyzes the transfer of the cytidylyl group of CTP to D-ribitol 5-phosphate. The polypeptide is Ribitol-5-phosphate cytidylyltransferase (Streptococcus agalactiae serotype V (strain ATCC BAA-611 / 2603 V/R)).